A 132-amino-acid chain; its full sequence is Holo-[acyl-carrier-protein] synthase (132 aa).

Residues Asp-8 and Glu-62 each coordinate Mg(2+).

The protein belongs to the P-Pant transferase superfamily. AcpS family. Requires Mg(2+) as cofactor.

Its subcellular location is the cytoplasm. The catalysed reaction is apo-[ACP] + CoA = holo-[ACP] + adenosine 3',5'-bisphosphate + H(+). Transfers the 4'-phosphopantetheine moiety from coenzyme A to a Ser of acyl-carrier-protein. The sequence is that of Holo-[acyl-carrier-protein] synthase from Polaromonas sp. (strain JS666 / ATCC BAA-500).